Consider the following 1413-residue polypeptide: DNA-directed RNA polymerase subunit beta' (1413 aa).

Zn(2+) is bound by residues cysteine 70, cysteine 72, cysteine 85, and cysteine 88. Mg(2+) contacts are provided by aspartate 460, aspartate 462, and aspartate 464. Zn(2+) is bound by residues cysteine 819, cysteine 893, cysteine 900, and cysteine 903.

The protein belongs to the RNA polymerase beta' chain family. In terms of assembly, the RNAP catalytic core consists of 2 alpha, 1 beta, 1 beta' and 1 omega subunit. When a sigma factor is associated with the core the holoenzyme is formed, which can initiate transcription. It depends on Mg(2+) as a cofactor. The cofactor is Zn(2+).

The enzyme catalyses RNA(n) + a ribonucleoside 5'-triphosphate = RNA(n+1) + diphosphate. Its function is as follows. DNA-dependent RNA polymerase catalyzes the transcription of DNA into RNA using the four ribonucleoside triphosphates as substrates. In Burkholderia multivorans (strain ATCC 17616 / 249), this protein is DNA-directed RNA polymerase subunit beta'.